The sequence spans 636 residues: tRNA 5-methylaminomethyl-2-thiouridine biosynthesis bifunctional protein MnmC (636 aa).

The tRNA (mnm(5)s(2)U34)-methyltransferase stretch occupies residues 1–202 (MTVSKILKQV…ERAALRAQSH (202 aa)). The segment at 227-636 (IGGGVASACL…GKALEMSGKS (410 aa)) is FAD-dependent cmnm(5)s(2)U34 oxidoreductase.

The protein in the N-terminal section; belongs to the methyltransferase superfamily. tRNA (mnm(5)s(2)U34)-methyltransferase family. This sequence in the C-terminal section; belongs to the DAO family. Requires FAD as cofactor.

It localises to the cytoplasm. The enzyme catalyses 5-aminomethyl-2-thiouridine(34) in tRNA + S-adenosyl-L-methionine = 5-methylaminomethyl-2-thiouridine(34) in tRNA + S-adenosyl-L-homocysteine + H(+). In terms of biological role, catalyzes the last two steps in the biosynthesis of 5-methylaminomethyl-2-thiouridine (mnm(5)s(2)U) at the wobble position (U34) in tRNA. Catalyzes the FAD-dependent demodification of cmnm(5)s(2)U34 to nm(5)s(2)U34, followed by the transfer of a methyl group from S-adenosyl-L-methionine to nm(5)s(2)U34, to form mnm(5)s(2)U34. This chain is tRNA 5-methylaminomethyl-2-thiouridine biosynthesis bifunctional protein MnmC, found in Shewanella halifaxensis (strain HAW-EB4).